Here is a 160-residue protein sequence, read N- to C-terminus: 6,7-dimethyl-8-ribityllumazine synthase (160 aa).

5-amino-6-(D-ribitylamino)uracil contacts are provided by residues tryptophan 28, 59–61 (ALE), and 81–83 (CVI). A (2S)-2-hydroxy-3-oxobutyl phosphate-binding site is contributed by 86–87 (ET). The active-site Proton donor is histidine 89. Position 114 (asparagine 114) interacts with 5-amino-6-(D-ribitylamino)uracil. A (2S)-2-hydroxy-3-oxobutyl phosphate-binding site is contributed by arginine 128.

It belongs to the DMRL synthase family.

It carries out the reaction (2S)-2-hydroxy-3-oxobutyl phosphate + 5-amino-6-(D-ribitylamino)uracil = 6,7-dimethyl-8-(1-D-ribityl)lumazine + phosphate + 2 H2O + H(+). The protein operates within cofactor biosynthesis; riboflavin biosynthesis; riboflavin from 2-hydroxy-3-oxobutyl phosphate and 5-amino-6-(D-ribitylamino)uracil: step 1/2. Its function is as follows. Catalyzes the formation of 6,7-dimethyl-8-ribityllumazine by condensation of 5-amino-6-(D-ribitylamino)uracil with 3,4-dihydroxy-2-butanone 4-phosphate. This is the penultimate step in the biosynthesis of riboflavin. In Corynebacterium jeikeium (strain K411), this protein is 6,7-dimethyl-8-ribityllumazine synthase.